Consider the following 234-residue polypeptide: Glucosamine-6-phosphate deaminase (234 aa).

Catalysis depends on Asp-63, which acts as the Proton acceptor; for enolization step. Asn-129 functions as the For ring-opening step in the catalytic mechanism. The Proton acceptor; for ring-opening step role is filled by His-131. The active-site For ring-opening step is the Glu-136.

This sequence belongs to the glucosamine/galactosamine-6-phosphate isomerase family. NagB subfamily.

It catalyses the reaction alpha-D-glucosamine 6-phosphate + H2O = beta-D-fructose 6-phosphate + NH4(+). It participates in amino-sugar metabolism; N-acetylneuraminate degradation; D-fructose 6-phosphate from N-acetylneuraminate: step 5/5. Catalyzes the reversible isomerization-deamination of glucosamine 6-phosphate (GlcN6P) to form fructose 6-phosphate (Fru6P) and ammonium ion. This Listeria innocua serovar 6a (strain ATCC BAA-680 / CLIP 11262) protein is Glucosamine-6-phosphate deaminase.